The chain runs to 258 residues: Spindlin-3 (258 aa).

Residues 1–23 (MKTPFGKAAAGQRSRTGAGHGSV) are disordered. Tudor-like domain regions lie at residues 50-99 (VGCR…LELH), 129-178 (VGKA…YQLL), and 210-255 (VGKQ…YDLV). Histone H3K4me3 and H3R8me2a binding regions lie at residues Glu-138 and 246 to 248 (DFH).

Belongs to the SPIN/STSY family. As to quaternary structure, interacts with C11orf84/SPINDOC.

Exhibits H3K4me3-binding activity. The chain is Spindlin-3 (SPIN3) from Pongo abelii (Sumatran orangutan).